We begin with the raw amino-acid sequence, 175 residues long: Inosine/xanthosine triphosphatase (175 aa).

Thr-8–Lys-13 is a binding site for substrate. Mg(2+)-binding residues include Asp-38 and Glu-68. Glu-68–Ala-69 contacts substrate.

It belongs to the YjjX NTPase family. Homodimer. It depends on Mg(2+) as a cofactor. Requires Mn(2+) as cofactor.

The catalysed reaction is XTP + H2O = XDP + phosphate + H(+). It catalyses the reaction ITP + H2O = IDP + phosphate + H(+). Phosphatase that hydrolyzes non-canonical purine nucleotides such as XTP and ITP to their respective diphosphate derivatives. Probably excludes non-canonical purines from DNA/RNA precursor pool, thus preventing their incorporation into DNA/RNA and avoiding chromosomal lesions. The protein is Inosine/xanthosine triphosphatase of Yersinia enterocolitica serotype O:8 / biotype 1B (strain NCTC 13174 / 8081).